The sequence spans 492 residues: N-succinylglutamate 5-semialdehyde dehydrogenase (492 aa).

220–225 (GSASTG) contributes to the NAD(+) binding site. Residues glutamate 243 and cysteine 277 contribute to the active site.

It belongs to the aldehyde dehydrogenase family. AstD subfamily.

The catalysed reaction is N-succinyl-L-glutamate 5-semialdehyde + NAD(+) + H2O = N-succinyl-L-glutamate + NADH + 2 H(+). The protein operates within amino-acid degradation; L-arginine degradation via AST pathway; L-glutamate and succinate from L-arginine: step 4/5. Functionally, catalyzes the NAD-dependent reduction of succinylglutamate semialdehyde into succinylglutamate. The chain is N-succinylglutamate 5-semialdehyde dehydrogenase from Salmonella heidelberg (strain SL476).